A 240-amino-acid polypeptide reads, in one-letter code: MSDIKDGNNDHLVQSDDPEHPANLIPALCRNFYSHGWVTGTGGGASIKRDNHIFIAPSGVQKELIQPHNIFVLSYPTPKYPPSARQYIRKPLKLNPSACTPLFLAAFERGAGCCIHTHSQWAVLVTLLVEREKGPEGCFEISNIEQIKGIPRGKGKGMMGFYDTLKIPIIENTAFEEDLTQSLEEAMEMYPDTYAVLVRRHGIYVWGDDVAKAKTQCESLDYLFQLAVEMHRLGLPWVKS.

C99 contributes to the substrate binding site. Zn(2+) is bound by residues H116 and H118. Catalysis depends on E145, which acts as the Proton donor/acceptor. A Zn(2+)-binding site is contributed by H201.

Belongs to the aldolase class II family. MtnB subfamily. Zn(2+) serves as cofactor.

The protein resides in the cytoplasm. It carries out the reaction 5-(methylsulfanyl)-D-ribulose 1-phosphate = 5-methylsulfanyl-2,3-dioxopentyl phosphate + H2O. The protein operates within amino-acid biosynthesis; L-methionine biosynthesis via salvage pathway; L-methionine from S-methyl-5-thio-alpha-D-ribose 1-phosphate: step 2/6. In terms of biological role, catalyzes the dehydration of methylthioribulose-1-phosphate (MTRu-1-P) into 2,3-diketo-5-methylthiopentyl-1-phosphate (DK-MTP-1-P). This Paracoccidioides brasiliensis (strain Pb03) protein is Methylthioribulose-1-phosphate dehydratase.